A 350-amino-acid chain; its full sequence is Ion-translocating oxidoreductase complex subunit D (350 aa).

A run of 3 helical transmembrane segments spans residues 25 to 45 (ILCA…GTVI), 89 to 109 (IPPL…IVIV), and 129 to 149 (VMLL…SVIA). The residue at position 185 (Thr-185) is an FMN phosphoryl threonine. 5 consecutive transmembrane segments (helical) span residues 212-232 (GFGV…LVML), 239-259 (WHIT…GYLL), 264-284 (FTGP…FFIA), 298-318 (LVFG…GGYP), and 319-339 (DAFA…DHYM).

The protein belongs to the NqrB/RnfD family. As to quaternary structure, the complex is composed of six subunits: RnfA, RnfB, RnfC, RnfD, RnfE and RnfG. Requires FMN as cofactor.

The protein localises to the cell inner membrane. In terms of biological role, part of a membrane-bound complex that couples electron transfer with translocation of ions across the membrane. This is Ion-translocating oxidoreductase complex subunit D from Shewanella sediminis (strain HAW-EB3).